The chain runs to 60 residues: Potassium channel toxin alpha-KTx 12.5 (60 aa).

Residues 1–22 form the signal peptide; it reads MNKLPILIFMLLVCSMFISSDC. 3 disulfides stabilise this stretch: Cys-30/Cys-51, Cys-36/Cys-56, and Cys-40/Cys-58.

This sequence belongs to the short scorpion toxin superfamily. Potassium channel inhibitor family. Alpha-KTx 12 subfamily. Expressed by the venom gland.

It localises to the secreted. Its function is as follows. This recombinant toxin inhibits the mammalian voltage-gated potassium channels Kv1.3/KCNA3 (IC(50)=28 nM). Kv1.1/KCNA1 and Kv1.2/KCNA2 potassium channels are also weakly inhibited (IC(50)=1.73 uM and IC(50)=12.63 uM, respectively). The polypeptide is Potassium channel toxin alpha-KTx 12.5 (Lychas mucronatus (Chinese swimming scorpion)).